Reading from the N-terminus, the 358-residue chain is Peptide chain release factor 1 (358 aa).

Glutamine 235 carries the N5-methylglutamine modification.

It belongs to the prokaryotic/mitochondrial release factor family. Methylated by PrmC. Methylation increases the termination efficiency of RF1.

It localises to the cytoplasm. Its function is as follows. Peptide chain release factor 1 directs the termination of translation in response to the peptide chain termination codons UAG and UAA. The sequence is that of Peptide chain release factor 1 from Brachyspira hyodysenteriae (strain ATCC 49526 / WA1).